The chain runs to 615 residues: Cilia- and flagella-associated protein 52 (615 aa).

WD repeat units follow at residues glycine 54–arginine 98, leucine 101–glycine 142, cysteine 145–arginine 184, glycine 232–lysine 275, alanine 320–arginine 359, valine 362–threonine 401, alanine 405–glutamate 444, aspartate 449–serine 488, phenylalanine 490–isoleucine 529, serine 533–valine 572, and alanine 575–aspartate 614.

This sequence belongs to the CFAP52 family.

The protein resides in the cytoplasm. The protein localises to the cell projection. Its subcellular location is the cilium. It localises to the flagellum. Its function is as follows. May play a role in cell growth and/or survival. The sequence is that of Cilia- and flagella-associated protein 52 from Chlamydomonas reinhardtii (Chlamydomonas smithii).